The sequence spans 754 residues: Phosphoribosylformylglycinamidine synthase subunit PurL (754 aa).

A disordered region spans residues 1-21; that stretch reads MLDTVEHAATTPDQPQPYGEL. H54 is an active-site residue. Residues Y57 and K101 each coordinate ATP. E103 is a binding site for Mg(2+). Substrate contacts are provided by residues 104–107 and R126; that span reads SHNH. Residue H105 is the Proton acceptor of the active site. D127 lines the Mg(2+) pocket. Position 252 (Q252) interacts with substrate. Residue D280 participates in Mg(2+) binding. 324-326 provides a ligand contact to substrate; that stretch reads ESQ. N512 and G549 together coordinate ATP. N550 is a binding site for Mg(2+). Substrate is bound at residue S552.

The protein belongs to the FGAMS family. Monomer. Part of the FGAM synthase complex composed of 1 PurL, 1 PurQ and 2 PurS subunits.

It localises to the cytoplasm. The enzyme catalyses N(2)-formyl-N(1)-(5-phospho-beta-D-ribosyl)glycinamide + L-glutamine + ATP + H2O = 2-formamido-N(1)-(5-O-phospho-beta-D-ribosyl)acetamidine + L-glutamate + ADP + phosphate + H(+). It functions in the pathway purine metabolism; IMP biosynthesis via de novo pathway; 5-amino-1-(5-phospho-D-ribosyl)imidazole from N(2)-formyl-N(1)-(5-phospho-D-ribosyl)glycinamide: step 1/2. Part of the phosphoribosylformylglycinamidine synthase complex involved in the purines biosynthetic pathway. Catalyzes the ATP-dependent conversion of formylglycinamide ribonucleotide (FGAR) and glutamine to yield formylglycinamidine ribonucleotide (FGAM) and glutamate. The FGAM synthase complex is composed of three subunits. PurQ produces an ammonia molecule by converting glutamine to glutamate. PurL transfers the ammonia molecule to FGAR to form FGAM in an ATP-dependent manner. PurS interacts with PurQ and PurL and is thought to assist in the transfer of the ammonia molecule from PurQ to PurL. The polypeptide is Phosphoribosylformylglycinamidine synthase subunit PurL (Mycobacterium bovis (strain ATCC BAA-935 / AF2122/97)).